The following is a 405-amino-acid chain: Chalcone synthase (405 aa).

C170 is an active-site residue.

It belongs to the thiolase-like superfamily. Chalcone/stilbene synthases family.

It carries out the reaction (E)-4-coumaroyl-CoA + 3 malonyl-CoA + 3 H(+) = 2',4,4',6'-tetrahydroxychalcone + 3 CO2 + 4 CoA. It functions in the pathway secondary metabolite biosynthesis; flavonoid biosynthesis. Its function is as follows. The primary product of this enzyme is 4,2',4',6'-tetrahydroxychalcone (also termed naringenin-chalcone or chalcone) which can under specific conditions spontaneously isomerize into naringenin. In Equisetum arvense (Field horsetail), this protein is Chalcone synthase (CHS).